The following is a 1122-amino-acid chain: AP-4 complex subunit epsilon-1 (1122 aa).

S699 carries the post-translational modification Phosphoserine. Composition is skewed to basic and acidic residues over residues 714-728 (YLPK…KPEA) and 745-760 (TTRK…STEE). Disordered regions lie at residues 714–760 (YLPK…STEE) and 797–861 (SKLK…AEKL). The segment at 726 to 1122 (PEASHVPAEG…CHCQKVMQTS (397 aa)) is interaction with TEPSIN. Positions 841-853 (ELSSELFRSESLS) are enriched in low complexity. S851 is modified (phosphoserine).

It belongs to the adaptor complexes large subunit family. Adaptor protein complex 4 (AP-4) is a heterotetramer composed of two large adaptins (epsilon-type subunit AP4E1 and beta-type subunit AP4B1), a medium adaptin (mu-type subunit AP4M1) and a small adaptin (sigma-type AP4S1). Interacts with TEPSIN. Interacts with GRIA2; probably indirect it mediates the somatodendritic localization of GRIA2 in neurons.

It localises to the golgi apparatus. The protein localises to the trans-Golgi network membrane. Component of the adaptor protein complex 4 (AP-4). Adaptor protein complexes are vesicle coat components involved both in vesicle formation and cargo selection. They control the vesicular transport of proteins in different trafficking pathways. AP-4 forms a non clathrin-associated coat on vesicles departing the trans-Golgi network (TGN) and may be involved in the targeting of proteins from the trans-Golgi network (TGN) to the endosomal-lysosomal system. It is also involved in protein sorting to the basolateral membrane in epithelial cells and the proper asymmetric localization of somatodendritic proteins in neurons. AP-4 is involved in the recognition and binding of tyrosine-based sorting signals found in the cytoplasmic part of cargos, but may also recognize other types of sorting signal. The sequence is that of AP-4 complex subunit epsilon-1 from Mus musculus (Mouse).